A 412-amino-acid polypeptide reads, in one-letter code: Aurora kinase (412 aa).

The interval 94–119 (NEKVRPSKSSHIPVKSPIRKKGHSPA) is disordered. A Protein kinase domain is found at 148–401 (FEIGKVLGKG…LAEVMNHPWI (254 aa)). ATP is bound by residues 154 to 162 (LGKGKLGKV) and K177. The active-site Proton acceptor is the D271.

This sequence belongs to the protein kinase superfamily. Ser/Thr protein kinase family. Aurora subfamily.

The protein localises to the nucleus. It localises to the cytoplasm. It is found in the cytoskeleton. The protein resides in the spindle. Its subcellular location is the chromosome. The protein localises to the centromere. It localises to the kinetochore. The catalysed reaction is L-seryl-[protein] + ATP = O-phospho-L-seryl-[protein] + ADP + H(+). The enzyme catalyses L-threonyl-[protein] + ATP = O-phospho-L-threonyl-[protein] + ADP + H(+). Its function is as follows. Component of the chromosomal passenger complex (CPC), a complex that acts as a key regulator of chromosome segregation and cytokinesis. Has a role in error-correction of aberrent kinetochore-microtubule attachments to ensure that sister kinetochores become bioriented and connect to opposite poles by promoting spindle assembly checkpoint signaling. The sequence is that of Aurora kinase (IPL1) from Debaryomyces hansenii (strain ATCC 36239 / CBS 767 / BCRC 21394 / JCM 1990 / NBRC 0083 / IGC 2968) (Yeast).